Here is a 64-residue protein sequence, read N- to C-terminus: Large ribosomal subunit protein uL29 (64 aa).

Belongs to the universal ribosomal protein uL29 family.

In Methanothermobacter thermautotrophicus (strain ATCC 29096 / DSM 1053 / JCM 10044 / NBRC 100330 / Delta H) (Methanobacterium thermoautotrophicum), this protein is Large ribosomal subunit protein uL29 (rpl29).